The chain runs to 362 residues: UPF0324 membrane protein YPO1307/y2878/YP_1285 (362 aa).

Helical transmembrane passes span 21–38 (YIPG…ALNV), 48–70 (GLGA…YPWL), 102–124 (VADV…FILA), 139–161 (VMLI…EPVL), 168–190 (VAVA…PWLY), 240–257 (MIRV…SAYL), 278–300 (WFAV…AVWV), 305–327 (TLDT…IGSI), and 334–356 (PLLL…NLFV).

This sequence belongs to the UPF0324 family.

It is found in the cell membrane. This is UPF0324 membrane protein YPO1307/y2878/YP_1285 from Yersinia pestis.